The sequence spans 276 residues: uncharacterized protein (276 aa).

The AB hydrolase-1 domain maps to 20-137; the sequence is PVLIFIPGAN…PPINTFLPDS (118 aa). A disordered region spans residues 57-76; the sequence is GESELTEPLPDSASNPDSDY.

Belongs to the AB hydrolase superfamily.

This is an uncharacterized protein from Staphylococcus aureus (strain bovine RF122 / ET3-1).